Here is a 299-residue protein sequence, read N- to C-terminus: ATP phosphoribosyltransferase (299 aa).

This sequence belongs to the ATP phosphoribosyltransferase family. Long subfamily. In terms of assembly, equilibrium between an active dimeric form, an inactive hexameric form and higher aggregates. Interconversion between the various forms is largely reversible and is influenced by the natural substrates and inhibitors of the enzyme. It depends on Mg(2+) as a cofactor.

It localises to the cytoplasm. It carries out the reaction 1-(5-phospho-beta-D-ribosyl)-ATP + diphosphate = 5-phospho-alpha-D-ribose 1-diphosphate + ATP. The protein operates within amino-acid biosynthesis; L-histidine biosynthesis; L-histidine from 5-phospho-alpha-D-ribose 1-diphosphate: step 1/9. Its activity is regulated as follows. Feedback inhibited by histidine. Functionally, catalyzes the condensation of ATP and 5-phosphoribose 1-diphosphate to form N'-(5'-phosphoribosyl)-ATP (PR-ATP). Has a crucial role in the pathway because the rate of histidine biosynthesis seems to be controlled primarily by regulation of HisG enzymatic activity. The protein is ATP phosphoribosyltransferase of Escherichia fergusonii (strain ATCC 35469 / DSM 13698 / CCUG 18766 / IAM 14443 / JCM 21226 / LMG 7866 / NBRC 102419 / NCTC 12128 / CDC 0568-73).